The primary structure comprises 489 residues: UDP-N-acetylmuramoylalanine--D-glutamate ligase (489 aa).

An ATP-binding site is contributed by 126–132 (GTNGKTT).

This sequence belongs to the MurCDEF family.

The protein resides in the cytoplasm. It carries out the reaction UDP-N-acetyl-alpha-D-muramoyl-L-alanine + D-glutamate + ATP = UDP-N-acetyl-alpha-D-muramoyl-L-alanyl-D-glutamate + ADP + phosphate + H(+). It functions in the pathway cell wall biogenesis; peptidoglycan biosynthesis. In terms of biological role, cell wall formation. Catalyzes the addition of glutamate to the nucleotide precursor UDP-N-acetylmuramoyl-L-alanine (UMA). In Mycobacterium avium (strain 104), this protein is UDP-N-acetylmuramoylalanine--D-glutamate ligase.